A 270-amino-acid chain; its full sequence is tRNA pseudouridine synthase A (270 aa).

D60 functions as the Nucleophile in the catalytic mechanism. An RNA binding region spans residues 107–111 (FHARF). Residue Y118 coordinates substrate. The interaction with tRNA stretch occupies residues 168–172 (QCQSR).

It belongs to the tRNA pseudouridine synthase TruA family. In terms of assembly, homodimer.

It carries out the reaction uridine(38/39/40) in tRNA = pseudouridine(38/39/40) in tRNA. Formation of pseudouridine at positions 38, 39 and 40 in the anticodon stem and loop of transfer RNAs. This is tRNA pseudouridine synthase A from Citrobacter koseri (strain ATCC BAA-895 / CDC 4225-83 / SGSC4696).